A 392-amino-acid chain; its full sequence is Frizzled-9 (392 aa).

At 1 to 35 the chain is on the extracellular side; it reads ACDNPEKFQYVEKSLSCAPRCSPGVDVYWSREDKD. Residues 36–56 form a helical membrane-spanning segment; the sequence is FAFVWMAVWSTLCFVSTAFTV. Residues 57–72 are Cytoplasmic-facing; the sequence is LTFLLDPHRFQYPERP. A helical membrane pass occupies residues 73 to 93; that stretch reads IIFLSMCYNVYSVAFIIRSVA. Residues 94-119 are Extracellular-facing; sequence GAETIACDRENGELYIIQEGLESTGC. A helical transmembrane segment spans residues 120 to 140; it reads TIVFLILYYFGMASSLWWVVL. The Cytoplasmic segment spans residues 141-161; sequence TLTWFLAAGKKWGHEAIEAHS. A helical transmembrane segment spans residues 162–182; that stretch reads SYFHMAAWGIPAMKTIVILTM. Residues 183 to 206 are Extracellular-facing; it reads RKVAGDELTGLCYVGSMDVSALTG. Residues 207–227 traverse the membrane as a helical segment; that stretch reads FVLIPLSCYLVVGTSFILTGF. Over 228–253 the chain is Cytoplasmic; the sequence is VALFHIRKIMKTGGTNTEKLEKLMVK. A helical transmembrane segment spans residues 254-274; sequence IGVFSILYTVPATCVIVCYFY. Residues 275-312 lie on the Extracellular side of the membrane; the sequence is ERLNVDYWNLRALERACVPLPGRRAADCSLEASVPTVA. Residues 313–333 form a helical membrane-spanning segment; the sequence is VFMLKIFMSLVVGITSGVWVW. Topologically, residues 334 to 392 are cytoplasmic; sequence SSKTLQTWQSLCNRKLGVRTRGKPCSGVSCGGVHCHYKAPTVMLHMTKTDPYLDNPTHV. The short motif at 336 to 341 is the Lys-Thr-X-X-X-Trp motif, mediates interaction with the PDZ domain of Dvl family members element; it reads KTLQTW. The short motif at 390-392 is the PDZ-binding element; the sequence is THV.

It belongs to the G-protein coupled receptor Fz/Smo family.

The protein resides in the cell membrane. Functionally, receptor for WNT2 that is coupled to the beta-catenin canonical signaling pathway, which leads to the activation of disheveled proteins, inhibition of GSK-3 kinase, nuclear accumulation of beta-catenin and activation of Wnt target genes. This is Frizzled-9 (FZD9) from Gallus gallus (Chicken).